The chain runs to 122 residues: Large ribosomal subunit protein uL18 (122 aa).

The protein belongs to the universal ribosomal protein uL18 family. In terms of assembly, part of the 50S ribosomal subunit; part of the 5S rRNA/L5/L18/L25 subcomplex. Contacts the 5S and 23S rRNAs.

This is one of the proteins that bind and probably mediate the attachment of the 5S RNA into the large ribosomal subunit, where it forms part of the central protuberance. This is Large ribosomal subunit protein uL18 from Agathobacter rectalis (strain ATCC 33656 / DSM 3377 / JCM 17463 / KCTC 5835 / VPI 0990) (Eubacterium rectale).